Consider the following 294-residue polypeptide: Type 4 apparatus protein DotZ (294 aa).

The T4BSS is a complex nanomachine composed of several subcomplexes. This subunit is part of the Type IV Coupling Complex (T4CC), a subcomplex composed of the DotLMNYZ core and the IcmSW-LvgA adapter subunits, linked by the C-terminal tail of DotL. Six DotLMNYZ hetero-pentameric units may assemble into a hexameric nanomachine, forming an inner membrane channel for effectors to pass through. Makes significant contact with DotN and DotY, but engages weakly with DotM and DotL. DotY and DotZ are co-dependent for the assembly into the T4CC.

Its subcellular location is the cytoplasm. Component of the Dot/Icm type IVB secretion system (T4BSS), which is used to inject bacterial effector proteins into eukaryotic host cells. Part of a subcomplex which recruits effector proteins and delivers them to the core transmembrane subcomplex. DotY and DotZ play a role in effector translocation, but are not essential and do not influence the stability of the subcomplex main components. The DotY/DotZ main function is to optimize secretion by modulating the delivery trajectory of the IcmSW module and the localization of the machinery to the poles. This chain is Type 4 apparatus protein DotZ, found in Legionella pneumophila subsp. pneumophila (strain Philadelphia 1 / ATCC 33152 / DSM 7513).